The chain runs to 1232 residues: Dynactin subunit 1 (1232 aa).

Positions 31–73 constitute a CAP-Gly domain; it reads GATLFATGKWVGVILDDSKGKNDGTVQGRRYFTCEENHGIFVR. Disordered regions lie at residues 82-183 and 339-358; these read DGAD…AQVK and SASE…KKNT. Low complexity predominate over residues 86-95; the sequence is TTSPETPEPT. Polar residues predominate over residues 108 to 117; sequence PKSSKLPTRP. Residues 118–130 show a composition bias toward low complexity; the sequence is SSSAASSGTASAS. The span at 133–144 shows a compositional bias: polar residues; the sequence is EISSSEPSTPAQ. The segment covering 146–163 has biased composition (low complexity); it reads PLAAPIIPSPSSAITSPV. 4 coiled-coil regions span residues 170 to 505, 908 to 1005, 1046 to 1071, and 1136 to 1166; these read GPSK…KEQQ, ETVI…RTIE, LLLQ…LKAH, and AAQL…ETVS. Positions 172–183 are enriched in basic and acidic residues; the sequence is SKEEENLRAQVK.

The protein belongs to the dynactin 150 kDa subunit family. In terms of assembly, monomer and homodimer. Subunit of dynactin, a multiprotein complex part of a tripartite complex with dynein and a adapter, such as BICDL1, BICD2 or HOOK3. The dynactin complex is built around ACTR1A/ACTB filament and consists of an actin-related filament composed of a shoulder domain, a pointed end and a barbed end. Its length is defined by its flexible shoulder domain. The soulder is composed of 2 DCTN1 subunits, 4 DCTN2 and 2 DCTN3. DCTN1/p150(glued) binds directly to microtubules and to cytoplasmic dynein.

Its subcellular location is the cytoplasm. It is found in the cytoskeleton. The protein localises to the microtubule organizing center. The protein resides in the centrosome. It localises to the centriole. Its subcellular location is the spindle. It is found in the cell cortex. Part of the dynactin complex that activates the molecular motor dynein for ultra-processive transport along microtubules. Plays a key role in dynein-mediated retrograde transport of vesicles and organelles along microtubules by recruiting and tethering dynein to microtubules. Binds to both dynein and microtubules providing a link between specific cargos, microtubules and dynein. Essential for targeting dynein to microtubule plus ends, recruiting dynein to membranous cargos and enhancing dynein processivity (the ability to move along a microtubule for a long distance without falling off the track). Can also act as a brake to slow the dynein motor during motility along the microtubule. Can regulate microtubule stability by promoting microtubule formation, nucleation and polymerization and by inhibiting microtubule catastrophe in neurons. Inhibits microtubule catastrophe by binding both to microtubules and to tubulin, leading to enhanced microtubule stability along the axon. Plays a role in metaphase spindle orientation. Plays a role in centriole cohesion and subdistal appendage organization and function. Its recruitment to the centriole in a KIF3A-dependent manner is essential for the maintenance of centriole cohesion and the formation of subdistal appendage. Also required for microtubule anchoring at the mother centriole. Plays a role in primary cilia formation. The polypeptide is Dynactin subunit 1 (dctn1) (Xenopus laevis (African clawed frog)).